Reading from the N-terminus, the 377-residue chain is Nitric oxide reductase FlRd-NAD(+) reductase (377 aa).

This sequence belongs to the FAD-dependent oxidoreductase family. It depends on FAD as a cofactor.

Its subcellular location is the cytoplasm. The enzyme catalyses 2 reduced [nitric oxide reductase rubredoxin domain] + NAD(+) + H(+) = 2 oxidized [nitric oxide reductase rubredoxin domain] + NADH. It participates in nitrogen metabolism; nitric oxide reduction. Functionally, one of at least two accessory proteins for anaerobic nitric oxide (NO) reductase. Reduces the rubredoxin moiety of NO reductase. The chain is Nitric oxide reductase FlRd-NAD(+) reductase from Escherichia coli O81 (strain ED1a).